Consider the following 199-residue polypeptide: Large ribosomal subunit protein bL25 (199 aa).

It belongs to the bacterial ribosomal protein bL25 family. CTC subfamily. Part of the 50S ribosomal subunit; part of the 5S rRNA/L5/L18/L25 subcomplex. Contacts the 5S rRNA. Binds to the 5S rRNA independently of L5 and L18.

Functionally, this is one of the proteins that binds to the 5S RNA in the ribosome where it forms part of the central protuberance. The sequence is that of Large ribosomal subunit protein bL25 from Pelodictyon phaeoclathratiforme (strain DSM 5477 / BU-1).